Consider the following 468-residue polypeptide: 3-isopropylmalate dehydratase large subunit (468 aa).

Cys347, Cys408, and Cys411 together coordinate [4Fe-4S] cluster.

Belongs to the aconitase/IPM isomerase family. LeuC type 1 subfamily. In terms of assembly, heterodimer of LeuC and LeuD. The cofactor is [4Fe-4S] cluster.

It catalyses the reaction (2R,3S)-3-isopropylmalate = (2S)-2-isopropylmalate. Its pathway is amino-acid biosynthesis; L-leucine biosynthesis; L-leucine from 3-methyl-2-oxobutanoate: step 2/4. Catalyzes the isomerization between 2-isopropylmalate and 3-isopropylmalate, via the formation of 2-isopropylmaleate. The polypeptide is 3-isopropylmalate dehydratase large subunit (Methylobacillus flagellatus (strain ATCC 51484 / DSM 6875 / VKM B-1610 / KT)).